We begin with the raw amino-acid sequence, 898 residues long: Chaperone protein ClpB 1 (898 aa).

One can recognise a Clp R domain in the interval 6–148 (PTKFTEQAWD…ELAIKAIRGS (143 aa)). 2 repeat regions span residues 9–74 (FTEQ…TNRQ) and 85–148 (LGRS…IRGS). Positions 161-344 (EALDKYGRDL…RRFQQVYVKQ (184 aa)) are NBD1. 208–215 (GEPGVGKT) provides a ligand contact to ATP. The segment at 345 to 560 (PSVDDTISIL…IAEIVAGWTG (216 aa)) is linker. The stretch at 395-536 (IDLVDEAAAR…KESKLLEIQG (142 aa)) forms a coiled coil. Positions 570 to 781 (ERQKLLQLEG…RIDDLIIFHT (212 aa)) are NBD2. 620 to 627 (GPTGVGKT) contributes to the ATP binding site. Residues 782–898 (LKRDELRRIV…TAVEVEVLSS (117 aa)) are C-terminal.

It belongs to the ClpA/ClpB family. Homohexamer. The oligomerization is ATP-dependent.

Its subcellular location is the cytoplasm. Part of a stress-induced multi-chaperone system, it is involved in the recovery of the cell from heat-induced damage, in cooperation with DnaK, DnaJ and GrpE. Acts before DnaK, in the processing of protein aggregates. Protein binding stimulates the ATPase activity; ATP hydrolysis unfolds the denatured protein aggregates, which probably helps expose new hydrophobic binding sites on the surface of ClpB-bound aggregates, contributing to the solubilization and refolding of denatured protein aggregates by DnaK. This is Chaperone protein ClpB 1 (clpB1) from Synechocystis sp. (strain ATCC 27184 / PCC 6803 / Kazusa).